Reading from the N-terminus, the 122-residue chain is Large ribosomal subunit protein bL17 (122 aa).

The protein belongs to the bacterial ribosomal protein bL17 family. As to quaternary structure, part of the 50S ribosomal subunit. Contacts protein L32.

The chain is Large ribosomal subunit protein bL17 from Nautilia profundicola (strain ATCC BAA-1463 / DSM 18972 / AmH).